Consider the following 285-residue polypeptide: Energy-coupling factor transporter ATP-binding protein EcfA1 (285 aa).

One can recognise an ABC transporter domain in the interval 9-246 (VTVEHLSFTY…VSLIKNAGLD (238 aa)). Position 43 to 50 (43 to 50 (GHNGSGKS)) interacts with ATP.

It belongs to the ABC transporter superfamily. Energy-coupling factor EcfA family. As to quaternary structure, forms a stable energy-coupling factor (ECF) transporter complex composed of 2 membrane-embedded substrate-binding proteins (S component), 2 ATP-binding proteins (A component) and 2 transmembrane proteins (T component).

It localises to the cell membrane. Functionally, ATP-binding (A) component of a common energy-coupling factor (ECF) ABC-transporter complex. Unlike classic ABC transporters this ECF transporter provides the energy necessary to transport a number of different substrates. The sequence is that of Energy-coupling factor transporter ATP-binding protein EcfA1 from Lactobacillus gasseri (strain ATCC 33323 / DSM 20243 / BCRC 14619 / CIP 102991 / JCM 1131 / KCTC 3163 / NCIMB 11718 / NCTC 13722 / AM63).